Reading from the N-terminus, the 103-residue chain is Small ribosomal subunit protein uS10 (103 aa).

It belongs to the universal ribosomal protein uS10 family. Part of the 30S ribosomal subunit.

Functionally, involved in the binding of tRNA to the ribosomes. This chain is Small ribosomal subunit protein uS10, found in Chlorobaculum tepidum (strain ATCC 49652 / DSM 12025 / NBRC 103806 / TLS) (Chlorobium tepidum).